Consider the following 169-residue polypeptide: Endoribonuclease YbeY (169 aa).

Residues His-126, His-130, and His-136 each coordinate Zn(2+).

This sequence belongs to the endoribonuclease YbeY family. It depends on Zn(2+) as a cofactor.

The protein localises to the cytoplasm. Its function is as follows. Single strand-specific metallo-endoribonuclease involved in late-stage 70S ribosome quality control and in maturation of the 3' terminus of the 16S rRNA. This chain is Endoribonuclease YbeY, found in Bradyrhizobium sp. (strain BTAi1 / ATCC BAA-1182).